The primary structure comprises 547 residues: Probable aquaporin-5 (547 aa).

The segment covering 1-13 (MSSSILNNRSARS) has biased composition (polar residues). The segment at 1–208 (MSSSILNNRS…DPRIPPNDRR (208 aa)) is disordered. Residues 1-269 (MSSSILNNRS…QWMNSNFKNH (269 aa)) are Cytoplasmic-facing. Residues 15 to 32 (PAGANPAFNPPAEASSSS) show a composition bias toward low complexity. Basic and acidic residues-rich tracts occupy residues 152–169 (EYER…DRYT) and 198–208 (DDPRIPPNDRR). A helical membrane pass occupies residues 270 to 290 (FVAGVGEFIGTTMFLFFAFAG). The Extracellular segment spans residues 291–316 (TEVANIQADTTNRTTTGESTGSLNVS). Asn-302 and Asn-314 each carry an N-linked (GlcNAc...) asparagine glycan. A helical transmembrane segment spans residues 317–337 (KLLYISIIFGFSLMVNVWVFF). The Cytoplasmic segment spans residues 338–363 (RISGGLFNPAVTMAMLMVKAISVTRA). The short motif at 345 to 347 (NPA) is the NPA 1 element. Residues 364–384 (IVLFLAQILGSMLASVVVRYL) traverse the membrane as a helical segment. Residues 385-400 (FPETFNVRTTLGGGAS) are Extracellular-facing. The helical transmembrane segment at 401–421 (LVQGVFIEALLTAELVFTIFM) threads the bilayer. Over 422 to 428 (LAKEKHR) the chain is Cytoplasmic. Residues 429–449 (ATFIAPVGIGLALFIAEMVGV) traverse the membrane as a helical segment. The Extracellular segment spans residues 450–475 (QFTGGSLNPARSFGPCVITGSFDTEH). The NPA 2 motif lies at 457 to 459 (NPA). A helical membrane pass occupies residues 476-496 (WIYWVGPAIGSLIAVCFYWFI). Residues 497–547 (KTLEYEMANPGADGDDLNDPTKNPEKRAEIQASKPVPTAAFGSGKTASILS) are Cytoplasmic-facing. The segment at 510–547 (GDDLNDPTKNPEKRAEIQASKPVPTAAFGSGKTASILS) is disordered.

Belongs to the MIP/aquaporin (TC 1.A.8) family.

Its subcellular location is the membrane. The catalysed reaction is H2O(in) = H2O(out). In terms of biological role, probable water channel that may have redundant functions with FgAQP3. This is Probable aquaporin-5 from Gibberella zeae (strain ATCC MYA-4620 / CBS 123657 / FGSC 9075 / NRRL 31084 / PH-1) (Wheat head blight fungus).